The following is a 661-amino-acid chain: DnaJ protein ERDJ2B (661 aa).

Residues 1 to 8 (MAESEENS) are Lumenal-facing. The chain crosses the membrane as a helical span at residues 9–29 (VLFPIFILTMMAIPLVPYTFV). Residues 30–65 (KLSRAFSKKQRSIHCQCLECDRSGKYKRSISQSISS) lie on the Cytoplasmic side of the membrane. Residues 66–86 (FTSCSNLTVVLLWIVMIFLIY) traverse the membrane as a helical segment. The Lumenal segment spans residues 87-190 (HTKNMSRESQ…FILNMNGESG (104 aa)). A glycan (N-linked (GlcNAc...) asparagine) is linked at asparagine 90. The 66-residue stretch at 99-164 (EPFGILGLEP…LSRENFEKYG (66 aa)) folds into the J domain. Residues 191 to 211 (GILLLCTVGLCILLPLVIASI) form a helical membrane-spanning segment. The SEC63 domain occupies 206-597 (LVIASIYLWR…IGCDQKTSLK (392 aa)). Topologically, residues 212-661 (YLWRSSKYTG…SSEESGSDEE (450 aa)) are cytoplasmic. A disordered region spans residues 608-661 (EGENAEEGLEEEDDEIEEEDYESEYSEDEEDKKRGSKKKVNKESSSEESGSDEE). Residues 609 to 637 (GENAEEGLEEEDDEIEEEDYESEYSEDEE) show a composition bias toward acidic residues.

Interacts with OEP61/TPR7. As to expression, expressed in leaves, flower buds and flowers.

The protein localises to the endoplasmic reticulum membrane. In terms of biological role, required for integral membrane and secreted preprotein translocation across the endoplasmic reticulum membrane. The protein is DnaJ protein ERDJ2B (ERDJ2B) of Arabidopsis thaliana (Mouse-ear cress).